A 1080-amino-acid polypeptide reads, in one-letter code: Kinesin-like protein KIN-14E (1080 aa).

The segment at 1-35 (MDFSWTTGWEKAAADDDEAESAPAPAPPAPSPQEA) is disordered. Positions 247–355 (QTRTSKLISK…KQEQTLLSLE (109 aa)) form a coiled coil. The 323-residue stretch at 407-729 (NIRVFCRCRP…LNFASRVRRI (323 aa)) folds into the Kinesin motor domain. 490 to 497 (GQTGTGKT) lines the ATP pocket. Residues 736–893 (KQVDTAELQK…EHHRSVAESK (158 aa)) adopt a coiled-coil conformation. A compositionally biased stretch (basic and acidic residues) spans 960-970 (AMSEKEQHILR). The segment at 960-1080 (AMSEKEQHIL…AVNKTRGWVR (121 aa)) is disordered. Over residues 971–985 (SSDSMNKKVTNNSSI) the composition is skewed to polar residues. Positions 1047-1059 (TATSKTAAATHKT) are enriched in low complexity.

It belongs to the TRAFAC class myosin-kinesin ATPase superfamily. Kinesin family. KIN-14 subfamily.

The sequence is that of Kinesin-like protein KIN-14E from Oryza sativa subsp. japonica (Rice).